A 326-amino-acid polypeptide reads, in one-letter code: Ribosomal RNA small subunit methyltransferase H (326 aa).

Residues 35–37, D53, F80, D101, and Q108 each bind S-adenosyl-L-methionine; that span reads GGY. The disordered stretch occupies residues 260 to 306; it reads EGVSRHLPQASNAGAGNPPPSFQAVSRRAVKPLDAETRVNPRSRSAR.

This sequence belongs to the methyltransferase superfamily. RsmH family.

It is found in the cytoplasm. The catalysed reaction is cytidine(1402) in 16S rRNA + S-adenosyl-L-methionine = N(4)-methylcytidine(1402) in 16S rRNA + S-adenosyl-L-homocysteine + H(+). Specifically methylates the N4 position of cytidine in position 1402 (C1402) of 16S rRNA. This is Ribosomal RNA small subunit methyltransferase H from Rhodospirillum rubrum (strain ATCC 11170 / ATH 1.1.1 / DSM 467 / LMG 4362 / NCIMB 8255 / S1).